We begin with the raw amino-acid sequence, 210 residues long: Putative transmembrane protein DDB_G0267530 (210 aa).

Residues 1-40 (MGVEDQPQTQPQTQPQQQPQMGYQPQMGYQPQAQMGYQPQ) are disordered. The next 2 membrane-spanning stretches (helical) occupy residues 119–139 (VIVF…FFFI) and 148–168 (TFGI…VIVV).

It localises to the membrane. This is Putative transmembrane protein DDB_G0267530 from Dictyostelium discoideum (Social amoeba).